A 165-amino-acid polypeptide reads, in one-letter code: Probable calcium-binding protein CML18 (165 aa).

4 EF-hand domains span residues 16–51, 52–87, 90–125, and 126–161; these read EQLAELREIFRSFDQNKDGSLTELELGSLLRSLGLK, PSQDQLDTLIQKADRNNNGLVEFSEFVALVEPDLVK, YTDDQLKAIFRMFDRDGNGYITAAELAHSMAKLGHA, and LTAEELTGMIKEADRDGDGCIDFQEFVQAITSAAFD. Ca(2+) is bound by residues Asp29, Asn31, Asp33, Ser35, Glu40, Asp65, Asn67, Asn69, Glu76, Asp103, Asp105, Asn107, Tyr109, Glu114, Asp139, Asp141, Asp143, Cys145, and Glu150.

Calcium and pH-dependent interaction with NHX1 (increases when pH decreases, better at pH 5.5 than at pH 7.5). Also interacts with the CPB protein At2g18750.

The protein localises to the vacuole. Functionally, potential calcium sensor that modulates ion selectivity of NHX1. The protein is Probable calcium-binding protein CML18 (CML18) of Arabidopsis thaliana (Mouse-ear cress).